The sequence spans 86 residues: MNYLTMISLALLVMTGVESGVRDAYIADNKNCIFTCYRDSYCKTECIKNGAETGYCIWIGEYGNACWCIKLPNKVPIKVPGKCNGR.

The N-terminal stretch at M1–S19 is a signal peptide. In terms of domain architecture, LCN-type CS-alpha/beta spans R22–N84. Cystine bridges form between C32-C83, C36-C56, C42-C66, and C46-C68. N84 bears the Asparagine amide mark.

It belongs to the long (4 C-C) scorpion toxin superfamily. Sodium channel inhibitor family. Alpha subfamily. As to expression, expressed by the venom gland.

It localises to the secreted. In terms of biological role, binds voltage-dependently at site-3 of sodium channels (Nav) and inhibits the inactivation of the activated channels, thereby blocking neuronal transmission. The sequence is that of Neurotoxin 8-related gene product 1/2/3 (NTVIIIrgp1) from Androctonus mauritanicus mauritanicus (Scorpion).